Here is a 309-residue protein sequence, read N- to C-terminus: MTATNHPKLFKRPVDGVLLLDKPGGMTSNEALQRVKRLFHAKKAGHTGSLDPLATGLLPICLGEATKFSQFLLEADKSYSVKGRLGVRTASGDSESPILTECPIPKLTKRALEKTLFAFRGVIDQTPSMYSALKHKGQPLYKLARQGIEVERKTRQVTIYELTLLDWDNESIELYVHCSKGTYIRTLLDDVGEALGCGAHVVALRRLRVAHYHEDQMIKLAHLEREYDKANYTGLDRYLLPLETMVSHFPAIKLSSSTAFYLQQGQAVMVPNAPTHGFVRLRDQNDQFIGIGEILSDARIAPRRLIQKR.

Aspartate 51 (nucleophile) is an active-site residue.

The protein belongs to the pseudouridine synthase TruB family. Type 1 subfamily.

The catalysed reaction is uridine(55) in tRNA = pseudouridine(55) in tRNA. Responsible for synthesis of pseudouridine from uracil-55 in the psi GC loop of transfer RNAs. This Coxiella burnetii (strain RSA 331 / Henzerling II) protein is tRNA pseudouridine synthase B.